We begin with the raw amino-acid sequence, 349 residues long: Protein MULTIPLE CHLOROPLAST DIVISION SITE 1 (349 aa).

A chloroplast-targeting transit peptide spans 1 to 52 (MASIDSLQFHSLCNLQSSIGRAKLQNPSSLVIFRRRPVNLNWVQFETKGSFV). At 53–116 (CKAIGDSSTP…VVFLMKKCSV (64 aa)) the chain is on the chloroplast intermembrane side. The helical transmembrane segment at 117 to 139 (NSIWIGVCITATVLVAAIRAYVV) threads the bilayer. Residues 140–349 (RKSRDNQRAG…NSSSEETHKS (210 aa)) lie on the Stromal side of the membrane. Positions 315-349 (QRPYKFSAKLEGENIQKNSQENHTGNSSSEETHKS) are disordered. A compositionally biased stretch (polar residues) spans 329–343 (IQKNSQENHTGNSSS).

In terms of assembly, interacts with MIND1. Interacts with ARC6 in the chloroplast stroma and binds to FtsZ2-1 in an ARC6-dependent manner.

The protein localises to the plastid. It localises to the chloroplast inner membrane. Functionally, required for chloroplast division. Together with MIND1 and ARC3, regulates FtsZ ring positioning in chloroplasts in an ARC6-dependent manner. Determines the site of chloroplast division in concert with MIND1. Not directly involved in ring formation, but required for MIND1 and MINE1 localization to regulate FtsZ ring formation during plastidial constriction. The protein is Protein MULTIPLE CHLOROPLAST DIVISION SITE 1 of Arabidopsis thaliana (Mouse-ear cress).